The primary structure comprises 177 residues: ATP-dependent protease subunit HslV (177 aa).

Thr6 is an active-site residue. The Na(+) site is built by Ser161, Cys164, and Thr167.

This sequence belongs to the peptidase T1B family. HslV subfamily. A double ring-shaped homohexamer of HslV is capped on each side by a ring-shaped HslU homohexamer. The assembly of the HslU/HslV complex is dependent on binding of ATP.

It localises to the cytoplasm. It catalyses the reaction ATP-dependent cleavage of peptide bonds with broad specificity.. Its activity is regulated as follows. Allosterically activated by HslU binding. In terms of biological role, protease subunit of a proteasome-like degradation complex believed to be a general protein degrading machinery. The chain is ATP-dependent protease subunit HslV from Thermodesulfovibrio yellowstonii (strain ATCC 51303 / DSM 11347 / YP87).